Here is a 125-residue protein sequence, read N- to C-terminus: Large ribosomal subunit protein bL12 (125 aa).

The protein belongs to the bacterial ribosomal protein bL12 family. Homodimer. Part of the ribosomal stalk of the 50S ribosomal subunit. Forms a multimeric L10(L12)X complex, where L10 forms an elongated spine to which 2 to 4 L12 dimers bind in a sequential fashion. Binds GTP-bound translation factors.

Functionally, forms part of the ribosomal stalk which helps the ribosome interact with GTP-bound translation factors. Is thus essential for accurate translation. This chain is Large ribosomal subunit protein bL12, found in Francisella tularensis subsp. tularensis (strain SCHU S4 / Schu 4).